The chain runs to 189 residues: Peptidyl-tRNA hydrolase (189 aa).

Position 14 (Tyr14) interacts with tRNA. The Proton acceptor role is filled by His19. Residues Tyr64, Asn66, and Asn112 each contribute to the tRNA site.

The protein belongs to the PTH family. Monomer.

It localises to the cytoplasm. It catalyses the reaction an N-acyl-L-alpha-aminoacyl-tRNA + H2O = an N-acyl-L-amino acid + a tRNA + H(+). Hydrolyzes ribosome-free peptidyl-tRNAs (with 1 or more amino acids incorporated), which drop off the ribosome during protein synthesis, or as a result of ribosome stalling. Functionally, catalyzes the release of premature peptidyl moieties from peptidyl-tRNA molecules trapped in stalled 50S ribosomal subunits, and thus maintains levels of free tRNAs and 50S ribosomes. The polypeptide is Peptidyl-tRNA hydrolase (Dehalococcoides mccartyi (strain CBDB1)).